The primary structure comprises 432 residues: Glutamate-1-semialdehyde 2,1-aminomutase 1 (432 aa).

At Lys-268 the chain carries N6-(pyridoxal phosphate)lysine.

Belongs to the class-III pyridoxal-phosphate-dependent aminotransferase family. HemL subfamily. As to quaternary structure, homodimer. The cofactor is pyridoxal 5'-phosphate.

It localises to the cytoplasm. The catalysed reaction is (S)-4-amino-5-oxopentanoate = 5-aminolevulinate. It participates in porphyrin-containing compound metabolism; protoporphyrin-IX biosynthesis; 5-aminolevulinate from L-glutamyl-tRNA(Glu): step 2/2. This chain is Glutamate-1-semialdehyde 2,1-aminomutase 1, found in Bacillus cereus (strain ZK / E33L).